Reading from the N-terminus, the 535-residue chain is Putative beta-glucosidase 41 (535 aa).

A signal peptide spans 1–27 (MESLMRLVLVLFPFFVVFFVPLDHVSS). An a beta-D-glucoside-binding site is contributed by Gln49. The N-linked (GlcNAc...) asparagine glycan is linked to Asn118. A beta-D-glucoside is bound by residues His151 and 196 to 197 (NE). The Proton donor role is filled by Glu197. A disulfide bridge connects residues Cys216 and Cys224. A beta-D-glucoside contacts are provided by Tyr340 and Glu413. The active-site Nucleophile is the Glu413. An N-linked (GlcNAc...) asparagine glycan is attached at Asn445. A beta-D-glucoside contacts are provided by residues Trp463, 470–471 (EW), and Phe479. Asn489 carries N-linked (GlcNAc...) asparagine glycosylation.

Belongs to the glycosyl hydrolase 1 family.

It carries out the reaction Hydrolysis of terminal, non-reducing beta-D-glucosyl residues with release of beta-D-glucose.. The chain is Putative beta-glucosidase 41 from Arabidopsis thaliana (Mouse-ear cress).